A 353-amino-acid polypeptide reads, in one-letter code: Phosphoribosylformylglycinamidine cyclo-ligase (353 aa).

This sequence belongs to the AIR synthase family.

It is found in the cytoplasm. The enzyme catalyses 2-formamido-N(1)-(5-O-phospho-beta-D-ribosyl)acetamidine + ATP = 5-amino-1-(5-phospho-beta-D-ribosyl)imidazole + ADP + phosphate + H(+). It participates in purine metabolism; IMP biosynthesis via de novo pathway; 5-amino-1-(5-phospho-D-ribosyl)imidazole from N(2)-formyl-N(1)-(5-phospho-D-ribosyl)glycinamide: step 2/2. The sequence is that of Phosphoribosylformylglycinamidine cyclo-ligase from Ralstonia nicotianae (strain ATCC BAA-1114 / GMI1000) (Ralstonia solanacearum).